We begin with the raw amino-acid sequence, 121 residues long: Large ribosomal subunit protein uL18 (121 aa).

It belongs to the universal ribosomal protein uL18 family. In terms of assembly, part of the 50S ribosomal subunit; part of the 5S rRNA/L5/L18/L25 subcomplex. Contacts the 5S and 23S rRNAs.

Its function is as follows. This is one of the proteins that bind and probably mediate the attachment of the 5S RNA into the large ribosomal subunit, where it forms part of the central protuberance. In Caldanaerobacter subterraneus subsp. tengcongensis (strain DSM 15242 / JCM 11007 / NBRC 100824 / MB4) (Thermoanaerobacter tengcongensis), this protein is Large ribosomal subunit protein uL18.